The sequence spans 141 residues: Putative pre-16S rRNA nuclease (141 aa).

The protein belongs to the YqgF nuclease family.

It is found in the cytoplasm. In terms of biological role, could be a nuclease involved in processing of the 5'-end of pre-16S rRNA. The protein is Putative pre-16S rRNA nuclease of Shewanella denitrificans (strain OS217 / ATCC BAA-1090 / DSM 15013).